The following is a 250-amino-acid chain: 5'-nucleotidase SurE (250 aa).

A divalent metal cation is bound by residues Asp8, Asp9, Ser40, and Asn95.

It belongs to the SurE nucleotidase family. It depends on a divalent metal cation as a cofactor.

It localises to the cytoplasm. The enzyme catalyses a ribonucleoside 5'-phosphate + H2O = a ribonucleoside + phosphate. In terms of biological role, nucleotidase that shows phosphatase activity on nucleoside 5'-monophosphates. The polypeptide is 5'-nucleotidase SurE (Nitratidesulfovibrio vulgaris (strain DP4) (Desulfovibrio vulgaris)).